A 396-amino-acid chain; its full sequence is S-adenosylmethionine synthase (396 aa).

Residue histidine 16 participates in ATP binding. Mg(2+) is bound at residue aspartate 18. Glutamate 44 provides a ligand contact to K(+). Residues glutamate 57 and glutamine 100 each coordinate L-methionine. The flexible loop stretch occupies residues glutamine 100–arginine 110. ATP-binding positions include aspartate 165 to lysine 167, aspartate 240, arginine 246 to lysine 247, alanine 263, and lysine 267. L-methionine is bound at residue aspartate 240. Lysine 271 contributes to the L-methionine binding site.

Belongs to the AdoMet synthase family. As to quaternary structure, homotetramer; dimer of dimers. It depends on Mg(2+) as a cofactor. Requires K(+) as cofactor.

The protein resides in the cytoplasm. The catalysed reaction is L-methionine + ATP + H2O = S-adenosyl-L-methionine + phosphate + diphosphate. Its pathway is amino-acid biosynthesis; S-adenosyl-L-methionine biosynthesis; S-adenosyl-L-methionine from L-methionine: step 1/1. In terms of biological role, catalyzes the formation of S-adenosylmethionine (AdoMet) from methionine and ATP. The overall synthetic reaction is composed of two sequential steps, AdoMet formation and the subsequent tripolyphosphate hydrolysis which occurs prior to release of AdoMet from the enzyme. This Pseudomonas putida (strain ATCC 700007 / DSM 6899 / JCM 31910 / BCRC 17059 / LMG 24140 / F1) protein is S-adenosylmethionine synthase.